Reading from the N-terminus, the 150-residue chain is Small ribosomal subunit protein uS15 (150 aa).

A compositionally biased stretch (basic residues) spans 1–10 (MPHRSRHKRG). The tract at residues 1–21 (MPHRSRHKRGSSGSVRPATKT) is disordered.

Belongs to the universal ribosomal protein uS15 family. As to quaternary structure, part of the 30S ribosomal subunit.

In Caldivirga maquilingensis (strain ATCC 700844 / DSM 13496 / JCM 10307 / IC-167), this protein is Small ribosomal subunit protein uS15.